The primary structure comprises 626 residues: Glutamate--cysteine ligase (626 aa).

Belongs to the glutamate--cysteine ligase type 3 family. Monomer.

The catalysed reaction is L-cysteine + L-glutamate + ATP = gamma-L-glutamyl-L-cysteine + ADP + phosphate + H(+). The protein operates within sulfur metabolism; glutathione biosynthesis; glutathione from L-cysteine and L-glutamate: step 1/2. In terms of biological role, an essential enzyme in glutathione (L-gamma-glutamyl-L-cysteinylglycine, GSH) biosynthesis, GSH is essential for growth and differentiation to prespore stage. Catalyzes the condensation of glutamate to cysteine. This Dictyostelium discoideum (Social amoeba) protein is Glutamate--cysteine ligase (gcsA).